Here is a 205-residue protein sequence, read N- to C-terminus: RPW8-like protein 2 (205 aa).

An RPW8 domain is found at 1–153 (MPLTEIIAGA…IMGQPIDCII (153 aa)). A helical membrane pass occupies residues 7-23 (IAGAALGLALQILHEAI). 2 coiled-coil regions span residues 70-92 (EDLK…LKRR) and 125-147 (ADIK…IMGQ).

The protein belongs to the plant RPW8 protein family.

It is found in the membrane. Functionally, probable disease resistance (R) protein. In Arabidopsis thaliana (Mouse-ear cress), this protein is RPW8-like protein 2.